A 151-amino-acid polypeptide reads, in one-letter code: SsrA-binding protein (151 aa).

A disordered region spans residues 121 to 151; sequence GKKLHDKRDTEKDREWQREKQRVMKNQRGAA. Residues 126–142 are compositionally biased toward basic and acidic residues; the sequence is DKRDTEKDREWQREKQR.

The protein belongs to the SmpB family.

It localises to the cytoplasm. Its function is as follows. Required for rescue of stalled ribosomes mediated by trans-translation. Binds to transfer-messenger RNA (tmRNA), required for stable association of tmRNA with ribosomes. tmRNA and SmpB together mimic tRNA shape, replacing the anticodon stem-loop with SmpB. tmRNA is encoded by the ssrA gene; the 2 termini fold to resemble tRNA(Ala) and it encodes a 'tag peptide', a short internal open reading frame. During trans-translation Ala-aminoacylated tmRNA acts like a tRNA, entering the A-site of stalled ribosomes, displacing the stalled mRNA. The ribosome then switches to translate the ORF on the tmRNA; the nascent peptide is terminated with the 'tag peptide' encoded by the tmRNA and targeted for degradation. The ribosome is freed to recommence translation, which seems to be the essential function of trans-translation. In Chromobacterium violaceum (strain ATCC 12472 / DSM 30191 / JCM 1249 / CCUG 213 / NBRC 12614 / NCIMB 9131 / NCTC 9757 / MK), this protein is SsrA-binding protein.